The primary structure comprises 318 residues: Ornithine carbamoyltransferase (318 aa).

Carbamoyl phosphate contacts are provided by residues 63–66 (STRT), Q90, R114, and 141–144 (HPCQ). Residues N172, D235, and 239-240 (SM) contribute to the L-ornithine site. Residues 275–276 (CL) and R303 each bind carbamoyl phosphate.

The protein belongs to the aspartate/ornithine carbamoyltransferase superfamily. OTCase family.

Its subcellular location is the cytoplasm. It catalyses the reaction carbamoyl phosphate + L-ornithine = L-citrulline + phosphate + H(+). Its pathway is amino-acid biosynthesis; L-arginine biosynthesis; L-arginine from L-ornithine and carbamoyl phosphate: step 1/3. Reversibly catalyzes the transfer of the carbamoyl group from carbamoyl phosphate (CP) to the N(epsilon) atom of ornithine (ORN) to produce L-citrulline. The chain is Ornithine carbamoyltransferase from Prochlorococcus marinus (strain SARG / CCMP1375 / SS120).